The chain runs to 765 residues: Dipeptidyl peptidase 4 (765 aa).

The Cytoplasmic portion of the chain corresponds to 1 to 6 (MKTPWK). Residues 7-29 (VLLGLLAIAALVTVITVPVVLLT) form a helical; Signal-anchor for type II membrane protein membrane-spanning segment. The Extracellular segment spans residues 30-765 (KGNDASTDSR…HFLKQCFSLL (736 aa)). Asn-84, Asn-91, Asn-149, Asn-218, Asn-228, Asn-271, Asn-280, Asn-320, and Asn-392 each carry an N-linked (GlcNAc...) asparagine glycan. 3 disulfide bridges follow: Cys-384/Cys-393, Cys-443/Cys-446, and Cys-453/Cys-471. Asn-495 carries N-linked (GlcNAc...) asparagine glycosylation. Residue Ser-629 is the Charge relay system of the active site. Residues Cys-648 and Cys-761 are joined by a disulfide bond. N-linked (GlcNAc...) asparagine glycosylation occurs at Asn-684. Active-site charge relay system residues include Asp-707 and His-739.

The protein belongs to the peptidase S9B family. DPPIV subfamily. As to quaternary structure, monomer. Homodimer. Heterodimer with Seprase (FAP). Requires homodimerization for optimal dipeptidyl peptidase activity and T-cell costimulation. Found in a membrane raft complex, at least composed of BCL10, CARD11, DPP4 and IKBKB. Associates with collagen. Interacts with PTPRC; the interaction is enhanced in an interleukin-12-dependent manner in activated lymphocytes. Interacts (via extracellular domain) with ADA; does not inhibit its dipeptidyl peptidase activity. Interacts with CAV1 (via the N-terminus); the interaction is direct. Interacts (via cytoplasmic tail) with CARD11 (via PDZ domain); its homodimerization is necessary for interaction with CARD11. Interacts with IGF2R; the interaction is direct. Interacts with GPC3. Post-translationally, the soluble form (Dipeptidyl peptidase 4 soluble form also named SDPP) derives from the membrane form (Dipeptidyl peptidase 4 membrane form also named MDPP) by proteolytic processing. N- and O-Glycosylated. In terms of processing, phosphorylated. Mannose 6-phosphate residues in the carbohydrate moiety are necessary for interaction with IGF2R in activated T-cells. Mannose 6-phosphorylation is induced during T-cell activation. In terms of tissue distribution, intestinal epithelium, dendritic cells and several immune system tissues.

The protein localises to the secreted. It localises to the cell membrane. It is found in the apical cell membrane. The protein resides in the cell projection. Its subcellular location is the invadopodium membrane. The protein localises to the lamellipodium membrane. It localises to the cell junction. It is found in the membrane raft. It carries out the reaction Release of an N-terminal dipeptide, Xaa-Yaa-|-Zaa-, from a polypeptide, preferentially when Yaa is Pro, provided Zaa is neither Pro nor hydroxyproline.. Its activity is regulated as follows. Inhibited by GPC3 and diprotin A. Cell surface glycoprotein receptor involved in the costimulatory signal essential for T-cell receptor (TCR)-mediated T-cell activation. Acts as a positive regulator of T-cell coactivation, by binding at least ADA, CAV1, IGF2R, and PTPRC. Its binding to CAV1 and CARD11 induces T-cell proliferation and NF-kappa-B activation in a T-cell receptor/CD3-dependent manner. Its interaction with ADA also regulates lymphocyte-epithelial cell adhesion. In association with FAP is involved in the pericellular proteolysis of the extracellular matrix (ECM), the migration and invasion of endothelial cells into the ECM. May be involved in the promotion of lymphatic endothelial cells adhesion, migration and tube formation. When overexpressed, enhanced cell proliferation, a process inhibited by GPC3. Also acts as a serine exopeptidase with a dipeptidyl peptidase activity that regulates various physiological processes by cleaving peptides in the circulation, including many chemokines, mitogenic growth factors, neuropeptides and peptide hormones. Removes N-terminal dipeptides sequentially from polypeptides having unsubstituted N-termini provided that the penultimate residue is proline. This Bos taurus (Bovine) protein is Dipeptidyl peptidase 4 (DPP4).